The following is a 511-amino-acid chain: Pickpocket protein 19 (511 aa).

A run of 2 helical transmembrane segments spans residues 59-79 and 471-491; these read LWLA…TVLM and GIIS…LFVL.

This sequence belongs to the amiloride-sensitive sodium channel (TC 1.A.6) family. Expressed in the tracheal system. Expressed in the taste-sensing terminal organ of the larval head. In adults, expressed in hairs on the tibia, femur and wing margin, but not in hairs on the tarsi of the leg.

The protein localises to the membrane. Its function is as follows. Part of a complex that plays a role in tracheal liquid clearance. In both larvae and adults, contributes to the behavioral response to salt. Probable role in sodium transport. The polypeptide is Pickpocket protein 19 (ppk19) (Drosophila melanogaster (Fruit fly)).